Reading from the N-terminus, the 399-residue chain is MIKKELPDEFGHFGPYGGMFVADTLVSALKQLEHAYTKYRNDQDFLSELHTELKDYVGRPNPLYHAVHLSKKIGGAQIYLKREDLNHTGAHKINNTIGQALLAKRMGKTRVIAETGAGQHGVATATVAAKFGFQCVVYMGSEDIKRQSSNVYRMKLLGAEVVPVTSGSKTLKDALNEALRDWVSHVDDTFYIIGTVAGPHPYPQMVRDFQAIIGVEARAQHMEKTGRLPDALVACVGGGSNAIGLFYPFLNDQSVMIYGVEAGGKGIETGEHSASLIAGKPGVLHGNRTYLLCDEYGQVKDTHSVSAGLDYPGVGPEHAYLKDTGRVIYKAINDSEALDAFRLLTHTEGIIPALESSHAVAYAIQLAKTMSKEQSIIVNLSGRGDKDMHTVAAIDGITI.

At K92 the chain carries N6-(pyridoxal phosphate)lysine.

It belongs to the TrpB family. Tetramer of two alpha and two beta chains. Pyridoxal 5'-phosphate is required as a cofactor.

It catalyses the reaction (1S,2R)-1-C-(indol-3-yl)glycerol 3-phosphate + L-serine = D-glyceraldehyde 3-phosphate + L-tryptophan + H2O. The protein operates within amino-acid biosynthesis; L-tryptophan biosynthesis; L-tryptophan from chorismate: step 5/5. The beta subunit is responsible for the synthesis of L-tryptophan from indole and L-serine. The sequence is that of Tryptophan synthase beta chain from Legionella pneumophila (strain Corby).